Here is a 381-residue protein sequence, read N- to C-terminus: Transaldolase 2 (381 aa).

Lysine 141 (schiff-base intermediate with substrate) is an active-site residue.

Belongs to the transaldolase family. Type 2 subfamily.

It is found in the cytoplasm. It carries out the reaction D-sedoheptulose 7-phosphate + D-glyceraldehyde 3-phosphate = D-erythrose 4-phosphate + beta-D-fructose 6-phosphate. The protein operates within carbohydrate degradation; pentose phosphate pathway; D-glyceraldehyde 3-phosphate and beta-D-fructose 6-phosphate from D-ribose 5-phosphate and D-xylulose 5-phosphate (non-oxidative stage): step 2/3. Its function is as follows. Transaldolase is important for the balance of metabolites in the pentose-phosphate pathway. This Nostoc sp. (strain PCC 7120 / SAG 25.82 / UTEX 2576) protein is Transaldolase 2 (tal2).